The following is a 445-amino-acid chain: Probable glycine dehydrogenase (decarboxylating) subunit 1 (445 aa).

Belongs to the GcvP family. N-terminal subunit subfamily. In terms of assembly, the glycine cleavage system is composed of four proteins: P, T, L and H. In this organism, the P 'protein' is a heterodimer of two subunits.

The enzyme catalyses N(6)-[(R)-lipoyl]-L-lysyl-[glycine-cleavage complex H protein] + glycine + H(+) = N(6)-[(R)-S(8)-aminomethyldihydrolipoyl]-L-lysyl-[glycine-cleavage complex H protein] + CO2. Functionally, the glycine cleavage system catalyzes the degradation of glycine. The P protein binds the alpha-amino group of glycine through its pyridoxal phosphate cofactor; CO(2) is released and the remaining methylamine moiety is then transferred to the lipoamide cofactor of the H protein. The chain is Probable glycine dehydrogenase (decarboxylating) subunit 1 from Citrifermentans bemidjiense (strain ATCC BAA-1014 / DSM 16622 / JCM 12645 / Bem) (Geobacter bemidjiensis).